The primary structure comprises 152 residues: MARMHARRRGKSSSVRPARNEAPAWSNTDKAAIEKLIVDLRKEGTSASMIGLVLRDRYGVPDVKMVTGKSIGDILTENKVSSEIPEDLRDLMVKALGLRKHLGENPKDLHNKRQLHLVEAKIRRLVKYYIGTRKLPAGFTYKPENAEILLSR.

Over residues 1–11 (MARMHARRRGK) the composition is skewed to basic residues. Residues 1–25 (MARMHARRRGKSSSVRPARNEAPAW) are disordered.

Belongs to the universal ribosomal protein uS15 family. Part of the 30S ribosomal subunit.

In Methanoregula boonei (strain DSM 21154 / JCM 14090 / 6A8), this protein is Small ribosomal subunit protein uS15.